Reading from the N-terminus, the 25-residue chain is Pregnancy-associated glycoprotein 72 (25 aa).

Residues N4 and N21 are each glycosylated (N-linked (GlcNAc...) asparagine).

It belongs to the peptidase A1 family. Post-translationally, N-glycosylated. In terms of tissue distribution, expressed in chorionic epithelium (trophectoderm).

Its subcellular location is the secreted. It localises to the extracellular space. The protein is Pregnancy-associated glycoprotein 72 of Bison bison (American bison).